Consider the following 191-residue polypeptide: MYVVLEGVDGAGKSTQVGLLKNKFKNALFTKEPGGTKIGESLRRIALNENISELARAFLFLSDRAEHVESVIKPALKEKKLIISDRSLISGMAYSEFSSLELNLLATQSILPTKIVLLLIDKEGLKQRLSLKSLDKIENQGIEKLLTIQRNLKTHAYALREKFGCKVLELNAKESVKNLHEKIAAFIKCVV.

7–14 lines the ATP pocket; that stretch reads GVDGAGKS.

This sequence belongs to the thymidylate kinase family.

It carries out the reaction dTMP + ATP = dTDP + ADP. Phosphorylation of dTMP to form dTDP in both de novo and salvage pathways of dTTP synthesis. The protein is Thymidylate kinase of Helicobacter pylori (strain P12).